We begin with the raw amino-acid sequence, 382 residues long: MKALHFGAGNIGRGFIGKLLADAGIQLTFADVNQVVLDALNARHSYQVHVVGETEQVDTVSGVNAVSSIGDDVVDLIAQVDLVTTAVGPVVLERIAPAIAKGLVKRKEQGNESPLNIIACENMVRGTTQLKGHVMNALPEDAKAWVEEHVGFVDSAVDRIVPPSASATNDPLEVTVETFSEWIVDKTQFKGALPNIPSMELTDNLMAFVERKLFTLNTGHAITAYLGKLAGHQTIRDAILDEKIRAVVKGAMEESGAVLIKRYGFDADKHAAYIQKILGRFENPYLKDDVERVGRQPLRKLSAGDRLIKPLLGTLEYSLPHKNLIQGIAGAMHFRSEDDPQAQELAALIADKGPQAALAQISGLDANSEVVSEAVTAYKAMQ.

3–14 (ALHFGAGNIGRG) is a binding site for NAD(+). Lys-269 carries the N6-acetyllysine modification.

This sequence belongs to the mannitol dehydrogenase family.

It carries out the reaction D-mannitol 1-phosphate + NAD(+) = beta-D-fructose 6-phosphate + NADH + H(+). This is Mannitol-1-phosphate 5-dehydrogenase from Shigella boydii serotype 18 (strain CDC 3083-94 / BS512).